Consider the following 108-residue polypeptide: UPF0060 membrane protein Mflv_3127 (108 aa).

Helical transmembrane passes span 7–27 (LLFV…WQGF), 32–52 (GWLW…VAAF), 61–81 (VLAA…MVAD), and 87–107 (RWDI…MYAP).

The protein belongs to the UPF0060 family.

The protein localises to the cell membrane. The sequence is that of UPF0060 membrane protein Mflv_3127 from Mycolicibacterium gilvum (strain PYR-GCK) (Mycobacterium gilvum (strain PYR-GCK)).